The chain runs to 233 residues: Large ribosomal subunit protein uL1 (233 aa).

It belongs to the universal ribosomal protein uL1 family. Part of the 50S ribosomal subunit.

Binds directly to 23S rRNA. The L1 stalk is quite mobile in the ribosome, and is involved in E site tRNA release. Its function is as follows. Protein L1 is also a translational repressor protein, it controls the translation of the L11 operon by binding to its mRNA. The chain is Large ribosomal subunit protein uL1 from Proteus vulgaris.